A 428-amino-acid chain; its full sequence is Glutamyl-tRNA reductase (428 aa).

Substrate is bound by residues Thr55–Arg58, Ser114, Glu119–Gln121, and Gln125. Catalysis depends on Cys56, which acts as the Nucleophile. Position 194–199 (Gly194–Ile199) interacts with NADP(+).

Belongs to the glutamyl-tRNA reductase family. Homodimer.

It catalyses the reaction (S)-4-amino-5-oxopentanoate + tRNA(Glu) + NADP(+) = L-glutamyl-tRNA(Glu) + NADPH + H(+). Its pathway is porphyrin-containing compound metabolism; protoporphyrin-IX biosynthesis; 5-aminolevulinate from L-glutamyl-tRNA(Glu): step 1/2. Catalyzes the NADPH-dependent reduction of glutamyl-tRNA(Glu) to glutamate 1-semialdehyde (GSA). The protein is Glutamyl-tRNA reductase of Paraburkholderia xenovorans (strain LB400).